A 210-amino-acid chain; its full sequence is Glutathione S-transferase-like protein FUS3 (210 aa).

One can recognise a GST N-terminal domain in the interval methionine 1–serine 74. The GST C-terminal domain maps to aspartate 80–arginine 206.

The protein belongs to the GST superfamily.

Functionally, glutathione S-transferase-like protein; part of the gene cluster that mediates the biosynthesis of the mycotoxin fusarin C. Within the cluster, FUS1, FUS2, FUS8 and FUS9 are sufficient for fusarin production. The other FUS cluster members are not essential for fusarin C biosynthesis. The polypeptide is Glutathione S-transferase-like protein FUS3 (Gibberella fujikuroi (strain CBS 195.34 / IMI 58289 / NRRL A-6831) (Bakanae and foot rot disease fungus)).